A 201-amino-acid chain; its full sequence is Outer-membrane lipoprotein LolB (201 aa).

The first 18 residues, 1 to 18 (MKWCRLSIILMSLILLAG), serve as a signal peptide directing secretion. Cys-19 carries the N-palmitoyl cysteine lipid modification. Cys-19 carries the S-diacylglycerol cysteine lipid modification.

It belongs to the LolB family. In terms of assembly, monomer.

The protein localises to the cell outer membrane. Its function is as follows. Plays a critical role in the incorporation of lipoproteins in the outer membrane after they are released by the LolA protein. This chain is Outer-membrane lipoprotein LolB, found in Nitrosococcus oceani (strain ATCC 19707 / BCRC 17464 / JCM 30415 / NCIMB 11848 / C-107).